Reading from the N-terminus, the 673-residue chain is DNA ligase (673 aa).

Residues 33 to 37, 82 to 83, and Glu-114 contribute to the NAD(+) site; these read DAEYD and SL. Lys-116 functions as the N6-AMP-lysine intermediate in the catalytic mechanism. Arg-137, Glu-174, Lys-291, and Lys-315 together coordinate NAD(+). Zn(2+) contacts are provided by Cys-409, Cys-412, Cys-427, and Cys-433. The BRCT domain maps to 592 to 673; sequence AQEQPLAGLV…LINLLEQHNG (82 aa).

It belongs to the NAD-dependent DNA ligase family. LigA subfamily. The cofactor is Mg(2+). Mn(2+) serves as cofactor.

It catalyses the reaction NAD(+) + (deoxyribonucleotide)n-3'-hydroxyl + 5'-phospho-(deoxyribonucleotide)m = (deoxyribonucleotide)n+m + AMP + beta-nicotinamide D-nucleotide.. In terms of biological role, DNA ligase that catalyzes the formation of phosphodiester linkages between 5'-phosphoryl and 3'-hydroxyl groups in double-stranded DNA using NAD as a coenzyme and as the energy source for the reaction. It is essential for DNA replication and repair of damaged DNA. The protein is DNA ligase of Pseudoalteromonas translucida (strain TAC 125).